A 483-amino-acid polypeptide reads, in one-letter code: Proline--tRNA ligase (483 aa).

Belongs to the class-II aminoacyl-tRNA synthetase family. ProS type 3 subfamily. In terms of assembly, homodimer.

It is found in the cytoplasm. The catalysed reaction is tRNA(Pro) + L-proline + ATP = L-prolyl-tRNA(Pro) + AMP + diphosphate. Functionally, catalyzes the attachment of proline to tRNA(Pro) in a two-step reaction: proline is first activated by ATP to form Pro-AMP and then transferred to the acceptor end of tRNA(Pro). The sequence is that of Proline--tRNA ligase from Mycoplasma genitalium (strain ATCC 33530 / DSM 19775 / NCTC 10195 / G37) (Mycoplasmoides genitalium).